Reading from the N-terminus, the 727-residue chain is Sodium-dependent neutral amino acid transporter SLC6A17 (727 aa).

The Cytoplasmic portion of the chain corresponds to 1–68; sequence MPKNSKVTQR…DRPAWNSKLQ (68 aa). Phosphoserine occurs at positions 13 and 20. A helical membrane pass occupies residues 69–89; the sequence is YILAQIGFSVGLGNIWRFPYL. The Extracellular segment spans residues 90 to 96; that stretch reads CQKNGGG. Residues 97 to 116 form a helical membrane-spanning segment; sequence AYLVPYLVLLIIIGIPLFFL. Residues 117 to 140 are Cytoplasmic-facing; sequence ELAVGQRIRRGSIGVWHYVCPRLG. A helical transmembrane segment spans residues 141–161; the sequence is GIGFSSCIVCLFVGLYYNVII. Residues 162-224 lie on the Extracellular side of the membrane; that stretch reads GWSVFYFFKS…NSISESGGLN (63 aa). N186 is a glycosylation site (N-linked (GlcNAc...) asparagine). A helical transmembrane segment spans residues 225 to 243; the sequence is WKMTVCLLVAWSIVGMAVV. The Cytoplasmic segment spans residues 244 to 251; sequence KGIQSSGK. Residues 252–269 form a helical membrane-spanning segment; the sequence is VMYFSSLFPYVVLACFLV. The Extracellular segment spans residues 270–304; that stretch reads RGLLLRGAVDGILHMFTPKLDKMLDPQVWREAATQ. Residues 305–322 form a helical membrane-spanning segment; sequence VFFALGLGFGGVIAFSSY. Over 323 to 333 the chain is Cytoplasmic; sequence NKQDNNCHFDA. Residues 334 to 355 form a helical membrane-spanning segment; sequence ALVSFINFFTSVLATLVVFAVL. Topologically, residues 356-451 are extracellular; that stretch reads GFKANIMNEK…FIAFTEAMTH (96 aa). Residue Y377 is modified to Phosphotyrosine. N-linked (GlcNAc...) asparagine glycosylation occurs at N393. The helical transmembrane segment at 452 to 471 threads the bilayer; sequence FPASPFWSVMFFLMLINLGL. Residues 472-494 are Cytoplasmic-facing; that stretch reads GSMIGTMAGITTPIIDTFKVPKE. The helical transmembrane segment at 495–513 threads the bilayer; the sequence is MFTVGCCVFAFFVGLLFVQ. Topologically, residues 514–528 are extracellular; that stretch reads RSGNYFVTMFDDYSA. The chain crosses the membrane as a helical span at residues 529-549; that stretch reads TLPLTVIVILENIAVAWIYGT. Residues 550 to 569 are Cytoplasmic-facing; it reads KKFMQELTEMLGFRPYRFYF. A helical transmembrane segment spans residues 570–591; it reads YMWKFVSPLCMAVLTTASIIQL. The Extracellular portion of the chain corresponds to 592-618; the sequence is GVSPPGYSAWIKEEAAERYLYFPNWAM. A helical membrane pass occupies residues 619–641; the sequence is ALLITLIAVATLPIPVVFILRHF. At 642-727 the chain is on the cytoplasmic side; the sequence is HLLSDGSNTL…LLASTPESEL (86 aa). Phosphoserine is present on residues S665 and S701. A disordered region spans residues 680–727; sequence VPSEAPSPMPTHRSYLGPGSTSPLESSSHPNGRYGSGYLLASTPESEL. Residues 698–709 show a composition bias toward polar residues; it reads GSTSPLESSSHP.

Belongs to the sodium:neurotransmitter symporter (SNF) (TC 2.A.22) family. Found exclusively in the central nervous system and is more abundant in the cerebellum and the cerebral cortex. Expressed in PC-12 cell line.

Its subcellular location is the cytoplasmic vesicle. The protein localises to the secretory vesicle. The protein resides in the synaptic vesicle membrane. It localises to the postsynapse. It is found in the presynapse. The enzyme catalyses L-proline(in) + Na(+)(in) = L-proline(out) + Na(+)(out). It catalyses the reaction L-leucine(in) + Na(+)(in) = L-leucine(out) + Na(+)(out). It carries out the reaction glycine(in) + Na(+)(in) = glycine(out) + Na(+)(out). The catalysed reaction is L-alanine(in) + Na(+)(in) = L-alanine(out) + Na(+)(out). The enzyme catalyses L-glutamine(in) + Na(+)(in) = L-glutamine(out) + Na(+)(out). In terms of biological role, synaptic vesicle transporter with apparent selectivity for neutral amino acids. The transport is sodium-coupled but chloride-independent, likely driven by the proton electrochemical gradient generated by vacuolar H(+)-ATPase in an overall electrogenic mechanism. May contribute to the synaptic uptake of neurotransmitter precursors in a process coupled in part to vesicle exocytosis. The polypeptide is Sodium-dependent neutral amino acid transporter SLC6A17 (Rattus norvegicus (Rat)).